A 247-amino-acid chain; its full sequence is UDP-2,3-diacylglucosamine hydrolase (247 aa).

The Mn(2+) site is built by Asp-8, His-10, Asp-41, Asn-79, and His-114. Position 79-80 (79-80 (NR)) interacts with substrate. Residues Asp-122, Ser-160, Asp-171, Gln-174, and His-202 each coordinate substrate. Mn(2+) contacts are provided by His-202 and His-204.

Belongs to the LpxH family. Requires Mn(2+) as cofactor.

Its subcellular location is the cell inner membrane. It catalyses the reaction UDP-2-N,3-O-bis[(3R)-3-hydroxytetradecanoyl]-alpha-D-glucosamine + H2O = 2-N,3-O-bis[(3R)-3-hydroxytetradecanoyl]-alpha-D-glucosaminyl 1-phosphate + UMP + 2 H(+). Its pathway is glycolipid biosynthesis; lipid IV(A) biosynthesis; lipid IV(A) from (3R)-3-hydroxytetradecanoyl-[acyl-carrier-protein] and UDP-N-acetyl-alpha-D-glucosamine: step 4/6. Hydrolyzes the pyrophosphate bond of UDP-2,3-diacylglucosamine to yield 2,3-diacylglucosamine 1-phosphate (lipid X) and UMP by catalyzing the attack of water at the alpha-P atom. Involved in the biosynthesis of lipid A, a phosphorylated glycolipid that anchors the lipopolysaccharide to the outer membrane of the cell. The chain is UDP-2,3-diacylglucosamine hydrolase from Xanthomonas campestris pv. campestris (strain B100).